The sequence spans 150 residues: Cilia- and flagella-associated protein 68 (150 aa).

Mn regions lie at residues 99–110 (TTYDTSYNNKMP) and 140–150 (KSTYMNSYSKS).

This sequence belongs to the CFAP68 family. In terms of assembly, microtubule inner protein component of sperm flagellar doublet microtubules.

The protein localises to the cytoplasm. It localises to the cytoskeleton. The protein resides in the cilium axoneme. It is found in the flagellum axoneme. Its subcellular location is the nucleus. The protein localises to the cell projection. It localises to the cilium. Its function is as follows. Microtubule inner protein (MIP) part of the dynein-decorated doublet microtubules (DMTs) in cilia axoneme, which is required for motile cilia beating. The protein is Cilia- and flagella-associated protein 68 (CFAP68) of Macaca fascicularis (Crab-eating macaque).